Consider the following 139-residue polypeptide: Protein Turandot B (139 aa).

An N-terminal signal peptide occupies residues 1 to 21; sequence MNFKTALICFALLLIGTLCSA.

This sequence belongs to the Turandot family.

It is found in the secreted. Functionally, a humoral factor that may play a role in stress tolerance. The protein is Protein Turandot B of Drosophila sechellia (Fruit fly).